The sequence spans 191 residues: Protein UL140 (191 aa).

The chain crosses the membrane as a helical span at residues 28–48; the sequence is TLVVFGFIVTLLFFLFMLYFW.

It is found in the host membrane. The chain is Protein UL140 (UL140) from Homo sapiens (Human).